Here is a 993-residue protein sequence, read N- to C-terminus: uncharacterized protein (993 aa).

The N-terminal stretch at 1–24 (MLLFKFNFTTAFLFTILAFAQARS) is a signal peptide. N-linked (GlcNAc...) asparagine glycans are attached at residues N7, N44, N89, N121, N138, N161, N169, N232, N361, N386, N393, N423, N447, N480, and N488. E504 is a catalytic residue. N-linked (GlcNAc...) asparagine glycans are attached at residues N545, N548, and N614. Residue D672 is the Proton donor of the active site. 8 N-linked (GlcNAc...) asparagine glycosylation sites follow: N673, N814, N826, N835, N846, N910, N940, and N987.

It belongs to the glycosyl hydrolase 31 family.

This is an uncharacterized protein from Schizosaccharomyces pombe (strain 972 / ATCC 24843) (Fission yeast).